The primary structure comprises 168 residues: Photosystem I assembly protein Ycf3 (168 aa).

TPR repeat units follow at residues 35-68 (AFAYYRDGMSAQSEGNYAEALQNYYEAMRLEIDP), 72-105 (SYILYNIGLIHTRNGEHTKALEYYFRALERNPFL), and 120-153 (GEQAIRQGDSEIAEAWFDQAAEYWKQALALTPGN).

The protein belongs to the Ycf3 family.

The protein resides in the plastid. The protein localises to the chloroplast thylakoid membrane. Essential for the assembly of the photosystem I (PSI) complex. May act as a chaperone-like factor to guide the assembly of the PSI subunits. This is Photosystem I assembly protein Ycf3 from Morus indica (Mulberry).